The chain runs to 899 residues: Toll-like receptor 4 (899 aa).

The first 46 residues, 1–46, serve as a signal peptide directing secretion; the sequence is MCPLQIHVLHLIQGNQKNRKGKYVNMTRQLWYILPLLFLLCHCVTS. N-linked (GlcNAc...) asparagine glycans are attached at residues Asn-25, Asn-75, Asn-83, and Asn-93. Topologically, residues 47 to 702 are extracellular; it reads ERRCYFSKIS…LERNCRSYTA (656 aa). 7 LRR repeats span residues 83 to 103, 104 to 126, 128 to 150, 155 to 179, 181 to 202, 203 to 229, and 230 to 253; these read NESV…PDLP, RSLL…AFAR, QNLT…LTAG, LTRL…VLSD, VSLN…MRKI, HALK…YFQN, and VHGI…TFSY. 4 N-linked (GlcNAc...) asparagine glycosylation sites follow: Asn-129, Asn-137, Asn-146, and Asn-168. 4 N-linked (GlcNAc...) asparagine glycosylation sites follow: Asn-237, Asn-256, Asn-275, and Asn-313. LRR repeat units follow at residues 257–282, 313–336, 338–360, and 363–386; these read LTHL…DLKN, NTSL…VLMY, PKTL…ALET, and LVNL…IFSN. 3 N-linked (GlcNAc...) asparagine glycosylation sites follow: Asn-388, Asn-432, and Asn-463. 7 LRR repeats span residues 468-493, 501-524, 526-549, 554-577, 579-601, 602-624, and 631-654; these read HYPL…VFYD, LEGL…FFDY, TGLK…EKGE, LLKL…ILRN, ISLE…LKHI, KGLR…VMRE, and SSNL…HFLR. A glycan (N-linked (GlcNAc...) asparagine) is linked at Asn-516. 3 N-linked (GlcNAc...) asparagine glycosylation sites follow: Asn-633, Asn-637, and Asn-668. The chain crosses the membrane as a helical span at residues 703–723; sequence VIVLFSCVFVILLTVIVCGVV. Over 724–899 the chain is Cytoplasmic; that stretch reads YRYRWKLRYL…WRKLRDPISM (176 aa). In terms of domain architecture, TIR spans 756–897; it reads YEFDAFISYA…IFWRKLRDPI (142 aa).

This sequence belongs to the Toll-like receptor family. As to expression, expressed in all tissues tested. The highest expression is in the hepatopancreas, with moderate expression in the gills, and low expression in the gonads, adductor muscle, hemocytes, and mantle.

The protein resides in the cell membrane. Its function is as follows. May be involved in the innate immune response. The sequence is that of Toll-like receptor 4 from Pinctada imbricata (Atlantic pearl-oyster).